Here is a 943-residue protein sequence, read N- to C-terminus: Isoleucine--tRNA ligase (943 aa).

The 'HIGH' region signature appears at 58-68; it reads PYANGNIHIGH. Residue Glu567 coordinates L-isoleucyl-5'-AMP. A 'KMSKS' region motif is present at residues 608 to 612; sequence KMSKS. An ATP-binding site is contributed by Lys611. Zn(2+) is bound by residues Cys906, Cys909, Cys926, and Cys929.

The protein belongs to the class-I aminoacyl-tRNA synthetase family. IleS type 1 subfamily. In terms of assembly, monomer. The cofactor is Zn(2+).

Its subcellular location is the cytoplasm. The enzyme catalyses tRNA(Ile) + L-isoleucine + ATP = L-isoleucyl-tRNA(Ile) + AMP + diphosphate. Catalyzes the attachment of isoleucine to tRNA(Ile). As IleRS can inadvertently accommodate and process structurally similar amino acids such as valine, to avoid such errors it has two additional distinct tRNA(Ile)-dependent editing activities. One activity is designated as 'pretransfer' editing and involves the hydrolysis of activated Val-AMP. The other activity is designated 'posttransfer' editing and involves deacylation of mischarged Val-tRNA(Ile). In Azotobacter vinelandii (strain DJ / ATCC BAA-1303), this protein is Isoleucine--tRNA ligase.